The sequence spans 685 residues: DNA ligase (685 aa).

NAD(+) contacts are provided by residues 39–43 (DGEYD), 88–89 (SL), and E119. K121 functions as the N6-AMP-lysine intermediate in the catalytic mechanism. Positions 142, 182, 302, and 326 each coordinate NAD(+). Zn(2+) is bound by residues C420, C423, C438, and C443. The 80-residue stretch at 606 to 685 (DNATFFSEKR…QTFLEHLDRG (80 aa)) folds into the BRCT domain.

The protein belongs to the NAD-dependent DNA ligase family. LigA subfamily. It depends on Mg(2+) as a cofactor. The cofactor is Mn(2+).

The catalysed reaction is NAD(+) + (deoxyribonucleotide)n-3'-hydroxyl + 5'-phospho-(deoxyribonucleotide)m = (deoxyribonucleotide)n+m + AMP + beta-nicotinamide D-nucleotide.. Functionally, DNA ligase that catalyzes the formation of phosphodiester linkages between 5'-phosphoryl and 3'-hydroxyl groups in double-stranded DNA using NAD as a coenzyme and as the energy source for the reaction. It is essential for DNA replication and repair of damaged DNA. The sequence is that of DNA ligase from Desulforapulum autotrophicum (strain ATCC 43914 / DSM 3382 / VKM B-1955 / HRM2) (Desulfobacterium autotrophicum).